The sequence spans 296 residues: Telomere repeat-binding factor 4 (296 aa).

One can recognise an HTH myb-type domain in the interval 1 to 62 (MGNQKLKWTA…WRNLSVAPGI (62 aa)). The segment at residues 28-58 (WKNILRDPELAEQLSSRSNIDLKDKWRNLSV) is a DNA-binding region (H-T-H motif). Residues 126-200 (NAPRYDGMIF…STQNFYKMND (75 aa)) enclose the H15 domain. The segment at 197–232 (KMNDNSLVQRTPHVARPKESNTKSRQQTNSQGPSIS) is disordered. A compositionally biased stretch (polar residues) spans 219-232 (KSRQQTNSQGPSIS). Residues 245–282 (KLVEVENKLDVSKGAAEEIERLMKLAEEADEMLVIARE) are a coiled coil.

This sequence belongs to the histone H1/H5 family. SMH subfamily.

It is found in the nucleus. Its subcellular location is the chromosome. Its function is as follows. Binds preferentially double-stranded telomeric repeats. The sequence is that of Telomere repeat-binding factor 4 from Arabidopsis thaliana (Mouse-ear cress).